The following is a 469-amino-acid chain: uncharacterized protein (469 aa).

The stretch at 11 to 65 (LFISVAFSQESVEDLKRLLEEYKKKIQEIERRLEELEKAKKEEEKKKEAVALKPT) forms a coiled coil.

This is an uncharacterized protein from Aquifex aeolicus (strain VF5).